Reading from the N-terminus, the 1637-residue chain is Endoribonuclease Dicer homolog 3b (1637 aa).

The disordered stretch occupies residues 1 to 40 (MADDEAAVLPPPPPLPPPCRPHRQLRPRGSRPTADTTPRT). The span at 9–19 (LPPPPPLPPPC) shows a compositional bias: pro residues. The span at 20 to 29 (RPHRQLRPRG) shows a compositional bias: basic residues. Positions 46-222 (VFEAALRGNT…LHNCEAHISQ (177 aa)) constitute a Helicase ATP-binding domain. 59–66 (LDTGSGKT) lines the ATP pocket. The DECH box motif lies at 169–172 (DECH). The 153-residue stretch at 404–556 (SFGSSNEVLC…ALYRHPNALS (153 aa)) folds into the Helicase C-terminal domain. Residues 581–671 (CVNLIRKYCE…VPLTEEPMDT (91 aa)) enclose the Dicer dsRNA-binding fold domain. The PAZ domain occupies 882 to 1006 (EIIHLANKSL…VPPELLIHLD (125 aa)). In terms of domain architecture, RNase III 1 spans 1031–1200 (ASQLRREIGY…LVGAYYVGGG (170 aa)). Residues aspartate 1214, aspartate 1309, and serine 1312 each contribute to the Mg(2+) site. An RNase III 2 domain is found at 1241 to 1389 (IEELEAKLKY…IAGAVFIDTD (149 aa)). 2 consecutive DRBM domains span residues 1412-1481 (LALP…DLKQ) and 1545-1629 (GPRS…KLQE).

Belongs to the helicase family. Dicer subfamily. As to quaternary structure, may interact with ARGONAUTE1 or PINHEAD through their common PAZ domains. Requires Mg(2+) as cofactor. The cofactor is Mn(2+).

Its subcellular location is the nucleus. Its function is as follows. Probably involved in the RNA silencing pathway. May cleave double-stranded RNA to produce short 21-24 nucleotides (nt) RNAs which target the selective destruction of complementary RNAs. The chain is Endoribonuclease Dicer homolog 3b (DCL3B) from Oryza sativa subsp. japonica (Rice).